The primary structure comprises 855 residues: Lon protease (855 aa).

One can recognise a Lon N-terminal domain in the interval 45–288 (IYLLTVKNVV…ETFRFLNIEY (244 aa)). ATP is bound at residue 439–446 (GPPGVGKT). One can recognise a Lon proteolytic domain in the interval 674–855 (IQVPGVVTGL…NEVIDLSIIK (182 aa)). Catalysis depends on residues Ser-761 and Lys-804.

This sequence belongs to the peptidase S16 family. In terms of assembly, homohexamer. Organized in a ring with a central cavity.

The protein resides in the cytoplasm. The catalysed reaction is Hydrolysis of proteins in presence of ATP.. ATP-dependent serine protease that mediates the selective degradation of mutant and abnormal proteins as well as certain short-lived regulatory proteins. Required for cellular homeostasis and for survival from DNA damage and developmental changes induced by stress. Degrades polypeptides processively to yield small peptide fragments that are 5 to 10 amino acids long. Binds to DNA in a double-stranded, site-specific manner. The sequence is that of Lon protease from Karelsulcia muelleri (strain GWSS) (Sulcia muelleri).